We begin with the raw amino-acid sequence, 358 residues long: UDP-N-acetylglucosamine--N-acetylmuramyl-(pentapeptide) pyrophosphoryl-undecaprenol N-acetylglucosamine transferase (358 aa).

Residues 11–13 (TGG), Asn120, Arg161, Ser188, and Gln282 each bind UDP-N-acetyl-alpha-D-glucosamine.

It belongs to the glycosyltransferase 28 family. MurG subfamily.

The protein resides in the cell inner membrane. The enzyme catalyses di-trans,octa-cis-undecaprenyl diphospho-N-acetyl-alpha-D-muramoyl-L-alanyl-D-glutamyl-meso-2,6-diaminopimeloyl-D-alanyl-D-alanine + UDP-N-acetyl-alpha-D-glucosamine = di-trans,octa-cis-undecaprenyl diphospho-[N-acetyl-alpha-D-glucosaminyl-(1-&gt;4)]-N-acetyl-alpha-D-muramoyl-L-alanyl-D-glutamyl-meso-2,6-diaminopimeloyl-D-alanyl-D-alanine + UDP + H(+). It participates in cell wall biogenesis; peptidoglycan biosynthesis. In terms of biological role, cell wall formation. Catalyzes the transfer of a GlcNAc subunit on undecaprenyl-pyrophosphoryl-MurNAc-pentapeptide (lipid intermediate I) to form undecaprenyl-pyrophosphoryl-MurNAc-(pentapeptide)GlcNAc (lipid intermediate II). The polypeptide is UDP-N-acetylglucosamine--N-acetylmuramyl-(pentapeptide) pyrophosphoryl-undecaprenol N-acetylglucosamine transferase (Synechococcus sp. (strain WH7803)).